The sequence spans 177 residues: MTDHSAARDAVTRLTRWADDFPQPGVRFADLTPVFSDADGFRVVVDALAACAPATEVIAAVDARGFLLGGGVARELGSGVVAVRKSGKLPPPVLSQSYTLEYGTATLEIPAGSIGLDGRSVLVVDDVLATGGTLDATARLVESAGARVIGIAVVLEIAALGGRERLGKYPLTSLVTV.

The protein belongs to the purine/pyrimidine phosphoribosyltransferase family. Homodimer.

The protein localises to the cytoplasm. The catalysed reaction is AMP + diphosphate = 5-phospho-alpha-D-ribose 1-diphosphate + adenine. Its pathway is purine metabolism; AMP biosynthesis via salvage pathway; AMP from adenine: step 1/1. Catalyzes a salvage reaction resulting in the formation of AMP, that is energically less costly than de novo synthesis. The chain is Adenine phosphoribosyltransferase from Rhodococcus opacus (strain B4).